We begin with the raw amino-acid sequence, 403 residues long: Protein WVD2-like 6 (403 aa).

Disordered stretches follow at residues 1–179 (MDSE…ALPN) and 254–403 (LKKI…AVEP). The span at 25 to 56 (GDSSNGNGGTSENLECCSTQHPMEASEGTQNE) shows a compositional bias: polar residues. Positions 103 to 118 (SVAPNVKPVKSPKSKS) are enriched in low complexity. Position 113 is a phosphoserine (serine 113). 3 stretches are compositionally biased toward basic and acidic residues: residues 120–132 (NGRE…HGNH), 139–153 (GTRD…RKQV), and 162–171 (QYPKEDDGKP). Over residues 263-273 (KSPKLGRKKTN) the composition is skewed to basic residues. A compositionally biased stretch (low complexity) spans 336-348 (KVAPAKAVTASTK). Residues 385-394 (VNEDRNESHM) are compositionally biased toward basic and acidic residues.

The protein belongs to the TPX2 family. Expressed in seedlings.

Its subcellular location is the cytoplasm. It localises to the cytoskeleton. Functionally, microtubule-associated protein (MAP) that regulates the orientation of interphase cortical microtubules. The polypeptide is Protein WVD2-like 6 (Arabidopsis thaliana (Mouse-ear cress)).